Reading from the N-terminus, the 726-residue chain is MDNPTDSAGKCPVAHGNTPRSRSNRDWWPDQLNVQILHQNSGRADPLGQAFDYAEEFKKLDLDGLKKDLHALMTDSQDWWPADFGHYGGLFIRMAWHSAGTYRITDGRGGAGAGQQRFAPLNSWPDNVNLDKARRLLWPIKQKYGNRISWADLLILTGNVALESMGFKTFGFAGGRADVWEPEELYWGPEGTWLGDERYSGERGLAEPLGAVQMGLIYVNPEGPNGTPDPLASARDIRETFARMAMNDEETVALIAGGHTFGKTHGAGDPSFVGVDPEGGELEAQGLGWTSKFNTGVGRDAIGSGLEVTWTQTPTQWSNYFFENLFAFEWELTKSPGGAHQWQAKNADASIPDAYDASKRHLPTMLTSDLALRFDPVYEKISRRFLENPDQFADAFARAWFKLTHRDMGPKVRYLGPEVPAEDLIWQDVIPAVDHPLVDDKDIADLKEKVLATGLTVQELVSTAWASASTFRGSDKRGGANGARIRLAPQKDWEVNQPAQLAKVLGVLEGIQKNFNAAQTGAKKISLADLIVLGGAAGVEKAAAAGGHAVSVPFTPGRMDASEAQTDAHSFAALKPRADGFRNYIGGRQFMKPEEALVDRAQLLTLTGPEMTVLVGGLRVLKAGAPEHGVFTSRPETLTNDFFVNLLDMGTQWSPAAGRDGVYEGRDRKTNDVKWTGTRVDLIFGSHSQLRAFAEVYGQADTKEKFVRDFVAAWTKVMNADRFDLV.

Positions 1-16 are cleaved as a signal peptide; sequence MDNPTDSAGKCPVAHG. The segment at 1–26 is disordered; the sequence is MDNPTDSAGKCPVAHGNTPRSRSNRD. A cross-link (tryptophyl-tyrosyl-methioninium (Trp-Tyr) (with M-244)) is located at residues 96 to 218; sequence WHSAGTYRIT…LGAVQMGLIY (123 aa). Residue His97 is the Proton acceptor of the active site. Residues 218-244 constitute a cross-link (tryptophyl-tyrosyl-methioninium (Tyr-Met) (with W-96)); it reads YVNPEGPNGTPDPLASARDIRETFARM. Residue His259 coordinates heme b.

This sequence belongs to the peroxidase family. Peroxidase/catalase subfamily. As to quaternary structure, homodimer or homotetramer. Heme b is required as a cofactor. In terms of processing, formation of the three residue Trp-Tyr-Met cross-link is important for the catalase, but not the peroxidase activity of the enzyme.

It catalyses the reaction H2O2 + AH2 = A + 2 H2O. It carries out the reaction 2 H2O2 = O2 + 2 H2O. Bifunctional enzyme with both catalase and broad-spectrum peroxidase activity. This Rhizobium johnstonii (strain DSM 114642 / LMG 32736 / 3841) (Rhizobium leguminosarum bv. viciae) protein is Catalase-peroxidase.